We begin with the raw amino-acid sequence, 145 residues long: Large-conductance mechanosensitive channel (145 aa).

2 consecutive transmembrane segments (helical) span residues 14-34 (VIDL…VNSL) and 83-103 (GAFL…FLLV).

It belongs to the MscL family. Homopentamer.

The protein resides in the cell inner membrane. Functionally, channel that opens in response to stretch forces in the membrane lipid bilayer. May participate in the regulation of osmotic pressure changes within the cell. This is Large-conductance mechanosensitive channel from Paracoccus denitrificans (strain Pd 1222).